Consider the following 436-residue polypeptide: 5-hydroxytryptamine receptor 6 (436 aa).

At 1 to 27 (MVPEPGPVNSSTPAWGPGPPPAPGGSG) the chain is on the extracellular side. N9 is a glycosylation site (N-linked (GlcNAc...) asparagine). Residues 28 to 52 (WVAAALCVVIVLTAAANSLLIVLIC) form a helical membrane-spanning segment. The Cytoplasmic segment spans residues 53–62 (TQPALRNTSN). A helical transmembrane segment spans residues 63 to 88 (FFLVSLFTSDLMVGLVVMPPAMLNAL). Residues 89 to 96 (YGRWVLAR) are Extracellular-facing. Residues 97–122 (GLCLLWTAFDVMCCSASILNLCLISL) form a helical membrane-spanning segment. The cysteines at positions 99 and 180 are disulfide-linked. Residue D106 participates in serotonin binding. The Cytoplasmic portion of the chain corresponds to 123–142 (DRYLLILSPLRYKLRMTAPR). Residues 143-167 (ALALILGAWSLAALASFLPLLLGWH) form a helical membrane-spanning segment. At 168-185 (ELGKARTPAPGQCRLLAS) the chain is on the extracellular side. A helical membrane pass occupies residues 186-209 (LPFVLVASGVTFFLPSGAICFTYC). At 210–266 (RILLAARKQAVQVASLTTGTAGQALETLQVPRTPRPGMESADSRRLATKHSRKALKA) the chain is on the cytoplasmic side. Residues 267-293 (SLTLGILLGMFFVTWLPFFVANIAQAV) traverse the membrane as a helical segment. Serotonin is bound at residue N288. Residues 294-299 (CDCISP) lie on the Extracellular side of the membrane. A helical membrane pass occupies residues 300 to 323 (GLFDVLTWLGYCNSTMNPIIYPLF). Over 324–436 (MRDFKRALGR…RYGRIHSVPP (113 aa)) the chain is Cytoplasmic.

This sequence belongs to the G-protein coupled receptor 1 family. As to quaternary structure, interacts with MTOR, RPTOR and NF1. Interacts with CDK5. Localized exclusively in the central nervous system, predominantly in the corpus striatum but also in various limbic and cortical regions.

It is found in the cell membrane. In terms of biological role, G-protein coupled receptor for 5-hydroxytryptamine (serotonin), a biogenic hormone that functions as a neurotransmitter, a hormone and a mitogen. Also has a high affinity for tricyclic psychotropic drugs. Ligand binding causes a conformation change that triggers signaling via guanine nucleotide-binding proteins (G proteins) and modulates the activity of downstream effectors. HTR6 is coupled to G(s) G alpha proteins and mediates activation of adenylate cyclase activity. Controls pyramidal neurons migration during corticogenesis, through the regulation of CDK5 activity. Is an activator of mTOR signaling. The protein is 5-hydroxytryptamine receptor 6 (Htr6) of Rattus norvegicus (Rat).